We begin with the raw amino-acid sequence, 353 residues long: Photosystem II D2 protein (353 aa).

T2 is subject to N-acetylthreonine. Residue T2 is modified to Phosphothreonine. The helical transmembrane segment at 41-61 (CAYFALGGWFTGTTFVTSWYT) threads the bilayer. H118 is a chlorophyll a binding site. The helical transmembrane segment at 125 to 141 (GFMLRQFELARPVQLRP) threads the bilayer. The pheophytin a site is built by Q130 and N143. Residues 153–166 (VFLSVFLIYPLGQS) traverse the membrane as a helical segment. A chlorophyll a-binding site is contributed by H198. A helical transmembrane segment spans residues 208–228 (AVLLCAIHGATVENTLFEDGD). A plastoquinone contacts are provided by H215 and F262. H215 is a binding site for Fe cation. Residue H269 participates in Fe cation binding. Residues 279–295 (GLWMSAIGVVGLALNLR) form a helical membrane-spanning segment.

This sequence belongs to the reaction center PufL/M/PsbA/D family. In terms of assembly, PSII is composed of 1 copy each of membrane proteins PsbA, PsbB, PsbC, PsbD, PsbE, PsbF, PsbH, PsbI, PsbJ, PsbK, PsbL, PsbM, PsbT, PsbX, PsbY, PsbZ, Psb30/Ycf12, at least 3 peripheral proteins of the oxygen-evolving complex and a large number of cofactors. It forms dimeric complexes. It depends on The D1/D2 heterodimer binds P680, chlorophylls that are the primary electron donor of PSII, and subsequent electron acceptors. It shares a non-heme iron and each subunit binds pheophytin, quinone, additional chlorophylls, carotenoids and lipids. There is also a Cl(-1) ion associated with D1 and D2, which is required for oxygen evolution. The PSII complex binds additional chlorophylls, carotenoids and specific lipids. as a cofactor. Post-translationally, only phosphorylated in mesophyll cells, phosphorylation increases when cells are grown under high rather than low light regimes (70 vs 900 umol photons/m-2/s).

It localises to the plastid. The protein resides in the chloroplast thylakoid membrane. It catalyses the reaction 2 a plastoquinone + 4 hnu + 2 H2O = 2 a plastoquinol + O2. Photosystem II (PSII) is a light-driven water:plastoquinone oxidoreductase that uses light energy to abstract electrons from H(2)O, generating O(2) and a proton gradient subsequently used for ATP formation. It consists of a core antenna complex that captures photons, and an electron transfer chain that converts photonic excitation into a charge separation. The D1/D2 (PsbA/PsbD) reaction center heterodimer binds P680, the primary electron donor of PSII as well as several subsequent electron acceptors. D2 is needed for assembly of a stable PSII complex. In Zea mays (Maize), this protein is Photosystem II D2 protein.